The following is a 403-amino-acid chain: Acetylornithine aminotransferase (403 aa).

Pyridoxal 5'-phosphate is bound by residues 107 to 108 (GA) and Phe-140. Residue Arg-143 coordinates N(2)-acetyl-L-ornithine. 225–228 (DEVQ) contributes to the pyridoxal 5'-phosphate binding site. Lys-254 bears the N6-(pyridoxal phosphate)lysine mark. Ser-282 serves as a coordination point for N(2)-acetyl-L-ornithine. Thr-283 contributes to the pyridoxal 5'-phosphate binding site.

This sequence belongs to the class-III pyridoxal-phosphate-dependent aminotransferase family. ArgD subfamily. As to quaternary structure, homodimer. Pyridoxal 5'-phosphate is required as a cofactor.

It is found in the cytoplasm. It catalyses the reaction N(2)-acetyl-L-ornithine + 2-oxoglutarate = N-acetyl-L-glutamate 5-semialdehyde + L-glutamate. The protein operates within amino-acid biosynthesis; L-arginine biosynthesis; N(2)-acetyl-L-ornithine from L-glutamate: step 4/4. The polypeptide is Acetylornithine aminotransferase (Vibrio vulnificus (strain YJ016)).